A 256-amino-acid polypeptide reads, in one-letter code: MPLLPMTKLELGHRGEAWEPGCLRAVAGELLFTFLFVFIGVASTITAGKAAGGAGEAAAVTAAAMAQALVVAVLATAGFHVSGGHLNPAVTLSLAVGGHITLFRSALYVAAQLAGSSLACLLLRCLTGGAATPVHALADGVGPVQGVAAEAVFTFTLLLVICATILDPRRAAPPGTGPLLTGLLVGANTVAGGALTGASMNPARSFGPALATGEWAHHWVYWVGPLAGGPLAVVAYELLFMDVEDAGGAHQPLPQE.

A run of 5 helical transmembrane segments spans residues 25–45 (AVAGELLFTFLFVFIGVASTI), 59–79 (AVTAAAMAQALVVAVLATAGF), 86–108 (LNPAVTLSLAVGGHITLFRSALY), 146–166 (GVAAEAVFTFTLLLVICATIL), and 178–198 (PLLTGLLVGANTVAGGALTGA). The short motif at 87–89 (NPA) is the NPA 1 element. Positions 201–203 (NPA) match the NPA 2 motif. A helical membrane pass occupies residues 220-240 (VYWVGPLAGGPLAVVAYELLF).

It belongs to the MIP/aquaporin (TC 1.A.8) family. TIP (TC 1.A.8.10) subfamily. Expressed in roots, leaves and anthers.

It localises to the vacuole membrane. Aquaporins facilitate the transport of water and small neutral solutes across cell membranes. May be involved in transport from the vacuolar compartment to the cytoplasm. The sequence is that of Probable aquaporin TIP4-2 (TIP4-2) from Oryza sativa subsp. japonica (Rice).